Consider the following 884-residue polypeptide: Exocyst complex component 2 (884 aa).

The segment covering 1-11 (MEENAQARERL) has biased composition (basic and acidic residues). Positions 1-27 (MEENAQARERLPPTVTGLSPTEGVPGT) are disordered. The 86-residue stretch at 13–98 (PTVTGLSPTE…GSSNVKFRVF (86 aa)) folds into the IPT/TIG domain. Coiled coils occupy residues 178-206 (ADAT…SEEM) and 846-874 (NQRL…AENL).

This sequence belongs to the SEC5 family. As to quaternary structure, the exocyst complex is composed of sec-3/exoc1, sec-5/exoc2, sec-6/exoc3, sec-8/exoc4, sec-10/exoc5, sec-15/exoc6, exo-70/exoc7 and exo-84/exoc8.

Its function is as follows. Component of the exocyst complex involved in the docking of exocytic vesicles with fusion sites on the plasma membrane. The chain is Exocyst complex component 2 (sec-5) from Caenorhabditis elegans.